The following is a 152-amino-acid chain: Transcriptional regulator MraZ (152 aa).

SpoVT-AbrB domains lie at 5–51 and 80–123; these read VNSI…PLPE and AAEC…DEVL.

Belongs to the MraZ family. In terms of assembly, forms oligomers.

It localises to the cytoplasm. The protein resides in the nucleoid. The sequence is that of Transcriptional regulator MraZ from Methylococcus capsulatus (strain ATCC 33009 / NCIMB 11132 / Bath).